Reading from the N-terminus, the 637-residue chain is 1-deoxy-D-xylulose-5-phosphate synthase (637 aa).

Thiamine diphosphate-binding positions include His88 and 129-131 (GHS). Asp160 provides a ligand contact to Mg(2+). Thiamine diphosphate is bound by residues 161–162 (GA), Asn189, Phe293, and Glu370. Asn189 contributes to the Mg(2+) binding site.

This sequence belongs to the transketolase family. DXPS subfamily. As to quaternary structure, homodimer. It depends on Mg(2+) as a cofactor. Thiamine diphosphate serves as cofactor.

The enzyme catalyses D-glyceraldehyde 3-phosphate + pyruvate + H(+) = 1-deoxy-D-xylulose 5-phosphate + CO2. The protein operates within metabolic intermediate biosynthesis; 1-deoxy-D-xylulose 5-phosphate biosynthesis; 1-deoxy-D-xylulose 5-phosphate from D-glyceraldehyde 3-phosphate and pyruvate: step 1/1. In terms of biological role, catalyzes the acyloin condensation reaction between C atoms 2 and 3 of pyruvate and glyceraldehyde 3-phosphate to yield 1-deoxy-D-xylulose-5-phosphate (DXP). In Acinetobacter baumannii (strain AYE), this protein is 1-deoxy-D-xylulose-5-phosphate synthase.